A 156-amino-acid polypeptide reads, in one-letter code: SsrA-binding protein (156 aa).

The segment at 134–156 is disordered; sequence YDKRETLKRKEQDREMARALRKR.

This sequence belongs to the SmpB family.

Its subcellular location is the cytoplasm. Its function is as follows. Required for rescue of stalled ribosomes mediated by trans-translation. Binds to transfer-messenger RNA (tmRNA), required for stable association of tmRNA with ribosomes. tmRNA and SmpB together mimic tRNA shape, replacing the anticodon stem-loop with SmpB. tmRNA is encoded by the ssrA gene; the 2 termini fold to resemble tRNA(Ala) and it encodes a 'tag peptide', a short internal open reading frame. During trans-translation Ala-aminoacylated tmRNA acts like a tRNA, entering the A-site of stalled ribosomes, displacing the stalled mRNA. The ribosome then switches to translate the ORF on the tmRNA; the nascent peptide is terminated with the 'tag peptide' encoded by the tmRNA and targeted for degradation. The ribosome is freed to recommence translation, which seems to be the essential function of trans-translation. This Latilactobacillus sakei subsp. sakei (strain 23K) (Lactobacillus sakei subsp. sakei) protein is SsrA-binding protein.